Reading from the N-terminus, the 194-residue chain is Orotate phosphoribosyltransferase (194 aa).

Position 117–125 (117–125) interacts with 5-phospho-alpha-D-ribose 1-diphosphate; that stretch reads EDIVTTGLS. Orotate contacts are provided by Thr121 and Arg149.

Belongs to the purine/pyrimidine phosphoribosyltransferase family. PyrE subfamily. Homodimer. Mg(2+) serves as cofactor.

The catalysed reaction is orotidine 5'-phosphate + diphosphate = orotate + 5-phospho-alpha-D-ribose 1-diphosphate. The protein operates within pyrimidine metabolism; UMP biosynthesis via de novo pathway; UMP from orotate: step 1/2. Functionally, catalyzes the transfer of a ribosyl phosphate group from 5-phosphoribose 1-diphosphate to orotate, leading to the formation of orotidine monophosphate (OMP). The chain is Orotate phosphoribosyltransferase from Parvibaculum lavamentivorans (strain DS-1 / DSM 13023 / NCIMB 13966).